The following is a 498-amino-acid chain: Delta(14)-sterol reductase erg24A (498 aa).

The next 4 helical transmembrane spans lie at 30–50 (LGAF…TFLC), 91–111 (VTVW…FLPG), 136–156 (ILIL…FVVW), and 163–183 (YVQI…FVYA). The N-linked (GlcNAc...) asparagine glycan is linked to Asn-257. 3 helical membrane passes run 275 to 295 (IVLS…MEPA), 302 to 322 (VIMD…VPFI), and 339 to 359 (LREI…FRGA). NADP(+)-binding positions include Lys-363, Arg-367, Trp-395, and 402 to 403 (NY). Asn-429 carries N-linked (GlcNAc...) asparagine glycosylation. Residues 444 to 464 (VRGWGMIFTYFFLVYFGALLI) traverse the membrane as a helical segment. NADP(+)-binding positions include Asp-470, 474 to 478 (CKSKY), and Tyr-485.

The protein belongs to the ERG4/ERG24 family.

It is found in the endoplasmic reticulum membrane. Its pathway is steroid metabolism; ergosterol biosynthesis. In terms of biological role, delta(14)-sterol reductase; part of the third module of ergosterol biosynthesis pathway that includes the late steps of the pathway. Catalyzes the reduction of the C14=C15 double bond within 4,4,24-trimethyl ergosta-8,14,24(28)-trienolto produce 4,4-dimethylfecosterol. The third module or late pathway involves the ergosterol synthesis itself through consecutive reactions that mainly occur in the endoplasmic reticulum (ER) membrane. Firstly, the squalene synthase erg9 catalyzes the condensation of 2 farnesyl pyrophosphate moieties to form squalene, which is the precursor of all steroids. Squalene synthase is crucial for balancing the incorporation of farnesyl diphosphate (FPP) into sterol and nonsterol isoprene synthesis. Secondly, squalene is converted into lanosterol by the consecutive action of the squalene epoxidase erg1 and the lanosterol synthase erg7. Then, the delta(24)-sterol C-methyltransferase erg6 methylates lanosterol at C-24 to produce eburicol. Eburicol is the substrate of the sterol 14-alpha demethylase encoded by cyp51A and cyp51B, to yield 4,4,24-trimethyl ergosta-8,14,24(28)-trienol. The C-14 reductase erg24 then reduces the C14=C15 double bond which leads to 4,4-dimethylfecosterol. A sequence of further demethylations at C-4, involving the C-4 demethylation complex containing the C-4 methylsterol oxidases erg25A or erg25B, the sterol-4-alpha-carboxylate 3-dehydrogenase erg26 and the 3-keto-steroid reductase erg27, leads to the production of fecosterol via 4-methylfecosterol. The C-8 sterol isomerase erg2 then catalyzes the reaction which results in unsaturation at C-7 in the B ring of sterols and thus converts fecosterol to episterol. The sterol-C5-desaturase erg3B then catalyzes the introduction of a C-5 double bond in the B ring to produce 5-dehydroepisterol. The 2 other sterol-C5-desaturases, erg3A and erg3C, seem to be less important in ergosterol biosynthesis. The C-22 sterol desaturase erg5 further converts 5-dehydroepisterol into ergosta-5,7,22,24(28)-tetraen-3beta-ol by forming the C-22(23) double bond in the sterol side chain. Finally, ergosta-5,7,22,24(28)-tetraen-3beta-ol is substrate of the C-24(28) sterol reductases erg4A and erg4B to produce ergosterol. Possible alternative sterol biosynthetic pathways might exist from fecosterol to ergosterol, depending on the activities of the erg3 isoforms. The protein is Delta(14)-sterol reductase erg24A of Aspergillus fumigatus (strain ATCC MYA-4609 / CBS 101355 / FGSC A1100 / Af293) (Neosartorya fumigata).